The primary structure comprises 1183 residues: Chromosome partition protein Smc (1183 aa).

32–39 (PNGSGKSN) is an ATP binding site. The stretch at 162-483 (EEAAGIKKLQ…KLSQDIREFE (322 aa)) forms a coiled coil. Positions 519-632 (SGIDGVLISL…VENIDIATDI (114 aa)) constitute an SMC hinge domain. Residues 666–1019 (INQIFERKKE…VMDLIQEIDE (354 aa)) adopt a coiled-coil conformation.

The protein belongs to the SMC family. Homodimer.

It is found in the cytoplasm. In terms of biological role, required for chromosome condensation and partitioning. This is Chromosome partition protein Smc from Fusobacterium nucleatum subsp. nucleatum (strain ATCC 25586 / DSM 15643 / BCRC 10681 / CIP 101130 / JCM 8532 / KCTC 2640 / LMG 13131 / VPI 4355).